Consider the following 430-residue polypeptide: MKTTIKQAKKHLNQEVTIGAWLTNKRSSGKIAFLQLRDGTGFMQGVVVKSEVDEETFQLAKDITQESSLYITGTITEDNRSDLGYEMQVKSIEIVHEAHDYPITPKNHGTEFLMDHRHLWLRSKKQHAVMKIRNEIIRATYEFFNENGFTKIDPPILTASAPEGTSELFHTKYFDEDAFLSQSGQLYMEAAAMAHGRVFSFGPTFRAEKSKTRRHLIEFWMIEPEMAFTNHAESLEIQEQYVSHIVQSVLNHCQLELKALDRDTTKLEKVATPFPRISYDDAIEFLKKEGFDDIEWGEDFGAPHETAIANHYDLPVFITNYPTKIKPFYMQPNPDNEDTVLCADLIAPEGYGEIIGGSERINDLELLEQRINEHELDEESYSYYLDLRRYGSVPHSGFGLGLERTVAWISGVEHVRETSPFPRLLNRLYP.

Belongs to the class-II aminoacyl-tRNA synthetase family. As to quaternary structure, homodimer.

The protein localises to the cytoplasm. The catalysed reaction is tRNA(Asn) + L-asparagine + ATP = L-asparaginyl-tRNA(Asn) + AMP + diphosphate + H(+). The sequence is that of Asparagine--tRNA ligase from Staphylococcus epidermidis (strain ATCC 35984 / DSM 28319 / BCRC 17069 / CCUG 31568 / BM 3577 / RP62A).